The chain runs to 65 residues: MSDLGRKDIGDKIESKLTPDSQKSTPEQFKDKVTDSLDSAAGKATSENDKSFVQKASDAIFGDSK.

The segment covering 1-17 (MSDLGRKDIGDKIESKL) has biased composition (basic and acidic residues). A disordered region spans residues 1–32 (MSDLGRKDIGDKIESKLTPDSQKSTPEQFKDK). Polar residues predominate over residues 18–27 (TPDSQKSTPE).

It to yeast HSP12/GLP1 and S.pombe hsp9.

The protein is White colony protein WHS11 (WHS11) of Candida albicans (strain WO-1) (Yeast).